The following is a 253-amino-acid chain: Zinc finger protein JAGGED (253 aa).

Positions 1-46 are disordered; that stretch reads MRHEENYLDLNNLPDDFSKDGNKQALEEGSSSGQRKKKGSKEGKDE. The span at 16–26 shows a compositional bias: basic and acidic residues; that stretch reads DFSKDGNKQAL. The segment at 51 to 73 adopts a C2H2-type zinc-finger fold; that stretch reads YECRFCSLKFCKSQALGGHMNRH.

As to quaternary structure, interacts with GATA18/HAN. In terms of tissue distribution, expressed in the emerging leaf, sepal, petal, stamen and carpel primordia. Not expressed in the apical shoot meristem (SAM).

The protein localises to the nucleus. Its function is as follows. Controls the morphogenesis of lateral organs. Functions in lateral organ shape and is sufficient to induce proliferation and growth of lateral organ tissue. Is necessary and sufficient for bract formation, but its expression is excluded from the cryptic bract, which could be a cause of bractless flowers in Arabidopsis. Participates with FIL and YAB3 in regulating valve margin development. Functions with JGL to define stamen and carpel shape. Functions with AS1 and AS2 in the sepal and petal primordia to repress boundary-specifying genes for normal development of the organs. The polypeptide is Zinc finger protein JAGGED (JAG) (Arabidopsis thaliana (Mouse-ear cress)).